Reading from the N-terminus, the 325-residue chain is Probable cell division protein WhiA (325 aa).

Positions S273–N306 form a DNA-binding region, H-T-H motif.

It belongs to the WhiA family.

In terms of biological role, involved in cell division and chromosome segregation. The sequence is that of Probable cell division protein WhiA from Frankia casuarinae (strain DSM 45818 / CECT 9043 / HFP020203 / CcI3).